Here is an 87-residue protein sequence, read N- to C-terminus: Putative protein KleG (87 aa).

Disordered stretches follow at residues 1–23 (MRHS…WPSS) and 61–87 (IPTT…IFSR). Over residues 68–78 (RGRRPQRHRPS) the composition is skewed to basic residues.

The chain is Putative protein KleG (kleG) from Escherichia coli.